The following is a 206-amino-acid chain: Small ribosomal subunit protein uS4 (206 aa).

The S4 RNA-binding domain occupies 96–156 (GRLDNVVYRM…EKSKKQARIK (61 aa)).

It belongs to the universal ribosomal protein uS4 family. As to quaternary structure, part of the 30S ribosomal subunit. Contacts protein S5. The interaction surface between S4 and S5 is involved in control of translational fidelity.

Functionally, one of the primary rRNA binding proteins, it binds directly to 16S rRNA where it nucleates assembly of the body of the 30S subunit. Its function is as follows. With S5 and S12 plays an important role in translational accuracy. The polypeptide is Small ribosomal subunit protein uS4 (Actinobacillus succinogenes (strain ATCC 55618 / DSM 22257 / CCUG 43843 / 130Z)).